The following is a 496-amino-acid chain: Glycerol kinase (496 aa).

Threonine 11 lines the ADP pocket. Residues threonine 11, threonine 12, and serine 13 each coordinate ATP. Sn-glycerol 3-phosphate is bound at residue threonine 11. Arginine 15 contributes to the ADP binding site. The sn-glycerol 3-phosphate site is built by arginine 81, glutamate 82, tyrosine 133, and aspartate 242. Residues arginine 81, glutamate 82, tyrosine 133, aspartate 242, and glutamine 243 each coordinate glycerol. ADP-binding residues include threonine 264 and glycine 307. Positions 264, 307, 311, and 408 each coordinate ATP. ADP-binding residues include glycine 408 and asparagine 412.

This sequence belongs to the FGGY kinase family.

It carries out the reaction glycerol + ATP = sn-glycerol 3-phosphate + ADP + H(+). It functions in the pathway polyol metabolism; glycerol degradation via glycerol kinase pathway; sn-glycerol 3-phosphate from glycerol: step 1/1. With respect to regulation, inhibited by fructose 1,6-bisphosphate (FBP). Functionally, key enzyme in the regulation of glycerol uptake and metabolism. Catalyzes the phosphorylation of glycerol to yield sn-glycerol 3-phosphate. The chain is Glycerol kinase from Trichlorobacter lovleyi (strain ATCC BAA-1151 / DSM 17278 / SZ) (Geobacter lovleyi).